The following is a 178-amino-acid chain: Large ribosomal subunit protein uL6 (178 aa).

The protein belongs to the universal ribosomal protein uL6 family. Part of the 50S ribosomal subunit.

This protein binds to the 23S rRNA, and is important in its secondary structure. It is located near the subunit interface in the base of the L7/L12 stalk, and near the tRNA binding site of the peptidyltransferase center. In Frankia alni (strain DSM 45986 / CECT 9034 / ACN14a), this protein is Large ribosomal subunit protein uL6.